The following is a 529-amino-acid chain: MDTRFHCVYLLTSLDPQCAGEYYIGYTVDPIRRLRQHNGEIVSGAWRTKRRGRPWELLCCVSGFGEDRIALKFEWCWQHPTKSTRLKTQMTQLRGVHRLPYAVGVLHLLLRADLFARLQLTLHIFEPERVGRVVAELQGRVPSISPLVATSLLRIEEITKERFMSLYLDGVSGDGTAGDGCVYFVTAPLSSQPDVDAPSRRVRSCRYLSEEDVFRQHARVKELLEANQCPCALCSLPLRSPYFVRCYRTPFCALRAHLACLAMWFTYETMQKRDVTMGQSTRNERSGEYSNKIKDDSNDGTMDAHASGRQLHSLSVNNADFSSSRDAGSILDSSGHISAFEESRCASSPSLTLLPCQPCPCPLCDEPLQWGALVHDLKRRAVLEKRWMERQRREKIEAALAERLQRLQNSSLTERKSRRKATPALGQKRNRGEYCGDTVGDGGKEAVTNWRARAMDGCDSWNDTNDFSHSVSLPPSRDEGYACDSSRRGVGGSKHTTRMTDEGKNDSITDICDCVLQLTEFNLDEWLDA.

Residues 4 to 89 (RFHCVYLLTS…PTKSTRLKTQ (86 aa)) enclose the GIY-YIG domain. An SLX1-type zinc finger spans residues 231–364 (CALCSLPLRS…PCQPCPCPLC (134 aa)). Disordered stretches follow at residues 275–305 (VTMGQSTRNERSGEYSNKIKDDSNDGTMDAH), 409–437 (NSSLTERKSRRKATPALGQKRNRGEYCGD), and 470–501 (SVSLPPSRDEGYACDSSRRGVGGSKHTTRMTD). The span at 282–297 (RNERSGEYSNKIKDDS) shows a compositional bias: basic and acidic residues.

Belongs to the SLX1 family. In terms of assembly, forms a heterodimer with a member of the SLX4 family. A divalent metal cation is required as a cofactor.

The protein resides in the nucleus. In terms of biological role, catalytic subunit of a heterodimeric structure-specific endonuclease that resolves DNA secondary structures generated during DNA repair and recombination. Has endonuclease activity towards branched DNA substrates, introducing single-strand cuts in duplex DNA close to junctions with ss-DNA. The chain is Structure-specific endonuclease subunit SLX1 homolog 1 from Trypanosoma cruzi (strain CL Brener).